Reading from the N-terminus, the 118-residue chain is Basic phospholipase A2 PA-9C (118 aa).

7 cysteine pairs are disulfide-bonded: Cys11/Cys71, Cys27/Cys117, Cys29/Cys45, Cys44/Cys98, Cys51/Cys91, Cys60/Cys84, and Cys78/Cys89. Positions 28, 30, and 32 each coordinate Ca(2+). Residue His48 is part of the active site. Residue Asp49 participates in Ca(2+) binding. Asp92 is an active-site residue.

Belongs to the phospholipase A2 family. Group I subfamily. D49 sub-subfamily. The cofactor is Ca(2+). Expressed by the venom gland.

The protein localises to the secreted. The enzyme catalyses a 1,2-diacyl-sn-glycero-3-phosphocholine + H2O = a 1-acyl-sn-glycero-3-phosphocholine + a fatty acid + H(+). In terms of biological role, PLA2 catalyzes the calcium-dependent hydrolysis of the 2-acyl groups in 3-sn-phosphoglycerides. In Pseudechis australis (Mulga snake), this protein is Basic phospholipase A2 PA-9C.